The chain runs to 95 residues: Alpha-bungarotoxin, isoform A31 (95 aa).

The N-terminal stretch at 1-21 (MKTLLLTLVVVTIVCLDLGYT) is a signal peptide. 5 disulfide bridges follow: Cys24–Cys44, Cys37–Cys65, Cys50–Cys54, Cys69–Cys80, and Cys81–Cys86.

The protein belongs to the three-finger toxin family. Long-chain subfamily. Type II alpha-neurotoxin sub-subfamily. Monomer in solution, homodimer in crystal state. Expressed by the venom gland.

The protein localises to the secreted. Binds with high affinity to muscular (tested on Torpedo marmorata, Kd=0.4 nM) and neuronal (tested on chimeric alpha-7/CHRNA7, Kd=0.95 nM) nicotinic acetylcholine receptor (nAChR) and inhibits acetylcholine from binding to the receptor, thereby impairing neuromuscular and neuronal transmission. It also shows an activity on GABA(A) receptors. It antagonises GABA-activated currents with high potency when tested on primary hippocampal neurons. It inhibits recombinantly expressed GABA(A) receptors composed of alpha-2-beta-2-gamma-2 (GABRA2-GABRB2-GABRG2) subunits with high potency (62.3% inhibition at 20 uM of toxin). It also shows a weaker inhibition on GABA(A) receptors composed of alpha-1-beta-2-gamma-2 (GABRA1-GABRB2-GABRG2) subunits, alpha-4-beta-2-gamma-2 (GABRA4-GABRB2-GABRG2) subunits, and alpha-5-beta-2-gamma-2 (GABRA5-GABRB2-GABRG2) subunits. A very weak inhibition is also observed on GABA(A) receptor composed of alpha-1-beta-3-gamma-2 (GABRA1-GABRB3-GABRG2). It has also been shown to bind and inhibit recombinant GABA(A) receptor beta-3/GABRB3 subunit (Kd=about 50 nM). In addition, it blocks the extracellular increase of dopamine evoked by nicotine only at the higher dose (4.2 uM). In vivo, when intraperitoneally injected into mice, induces flaccid paralysis of the limbs and respiratory distress, and causes death in a dose-dependent manner. The sequence is that of Alpha-bungarotoxin, isoform A31 from Bungarus candidus (Malayan krait).